Here is a 491-residue protein sequence, read N- to C-terminus: Glutamate--tRNA ligase (491 aa).

Positions 9–19 (PSPTGTPHVGL) match the 'HIGH' region motif. The 'KMSKS' region signature appears at 253-257 (KLSKR). Lysine 256 contacts ATP.

This sequence belongs to the class-I aminoacyl-tRNA synthetase family. Glutamate--tRNA ligase type 1 subfamily. As to quaternary structure, monomer.

The protein resides in the cytoplasm. The catalysed reaction is tRNA(Glu) + L-glutamate + ATP = L-glutamyl-tRNA(Glu) + AMP + diphosphate. Catalyzes the attachment of glutamate to tRNA(Glu) in a two-step reaction: glutamate is first activated by ATP to form Glu-AMP and then transferred to the acceptor end of tRNA(Glu). The chain is Glutamate--tRNA ligase from Mycolicibacterium gilvum (strain PYR-GCK) (Mycobacterium gilvum (strain PYR-GCK)).